We begin with the raw amino-acid sequence, 351 residues long: Columbamine O-methyltransferase (351 aa).

S-adenosyl-L-methionine contacts are provided by glycine 198, aspartate 221, aspartate 241, methionine 242, and lysine 255. Histidine 259 (proton acceptor) is an active-site residue.

Belongs to the class I-like SAM-binding methyltransferase superfamily. Cation-independent O-methyltransferase family. COMT subfamily. In terms of assembly, homodimer.

The catalysed reaction is columbamine + S-adenosyl-L-methionine = palmatine + S-adenosyl-L-homocysteine + H(+). It carries out the reaction (S)-tetrahydrocolumbamine + S-adenosyl-L-methionine = (S)-tetrahydropalmatine + S-adenosyl-L-homocysteine + H(+). The protein operates within alkaloid biosynthesis; palmatine biosynthesis; palmatine from columbamine: step 1/1. In terms of biological role, catalyzes the conversion of tetrahydrocolumbamine to (S)-tetrahydropalmatine and of columbamine to palmatine, an isoquinoline alkaloid. In Coptis japonica (Japanese goldthread), this protein is Columbamine O-methyltransferase.